We begin with the raw amino-acid sequence, 316 residues long: Olfactory receptor 8J1 (316 aa).

Topologically, residues 1 to 25 are extracellular; the sequence is MAPENFTRVTEFILTGVSSCPELQI. N-linked (GlcNAc...) asparagine glycosylation occurs at Asn-5. A helical transmembrane segment spans residues 26 to 46; sequence PLFLVFLVLYGLTMAGNLGII. At 47-54 the chain is on the cytoplasmic side; that stretch reads TLTSVDSR. Residues 55–75 form a helical membrane-spanning segment; it reads LQTPMYFFLQHLALINLGNST. Residues 76–99 are Extracellular-facing; the sequence is VIAPKMLINFLVKKKTTSFYECAT. Cysteines 97 and 189 form a disulfide. A helical transmembrane segment spans residues 100 to 120; sequence QLGGFLFFIVSEVIMLALMAY. Residues 121–139 lie on the Cytoplasmic side of the membrane; sequence DRYVAICNPLLYMVVVSRR. A helical transmembrane segment spans residues 140 to 160; that stretch reads LCLLLVSLTYLYGFSTAIVVS. At 161 to 197 the chain is on the extracellular side; that stretch reads SYVFSVSYCSSNIINHFYCDNVPLLALSCSDTYLPET. The helical transmembrane segment at 198–217 threads the bilayer; sequence VVFISAATNVVGSLIIVLVS. Over 218 to 237 the chain is Cytoplasmic; it reads YFNIVLSILKICSSEGRKKA. The helical transmembrane segment at 238–258 threads the bilayer; that stretch reads FSTCASHMMAVTIFYGTLLFM. Residues 259–272 are Extracellular-facing; that stretch reads YVQPRSNHSLDTDD. Residues 273 to 293 traverse the membrane as a helical segment; it reads KMASVFYTLVIPMLNPLIYSL. Topologically, residues 294–316 are cytoplasmic; the sequence is RNKDVKTALQRFMTNLCYSFKTM.

Belongs to the G-protein coupled receptor 1 family.

Its subcellular location is the cell membrane. In terms of biological role, odorant receptor. The sequence is that of Olfactory receptor 8J1 (OR8J1) from Homo sapiens (Human).